A 1051-amino-acid chain; its full sequence is Protein transport protein Sec16B (1051 aa).

Positions 1 to 23 are enriched in polar residues; the sequence is MEPWVPQTQGRTTGPSRDTNRGL. Residues 1–109 are disordered; sequence MEPWVPQTQG…PYQRYHTPTP (109 aa). The segment covering 39 to 63 has biased composition (basic and acidic residues); that stretch reads DKYHQWQDAHKNSKSQQDLRDDHQQ. Residues 64 to 77 are compositionally biased toward polar residues; the sequence is SHSVSRSGEWSQPV. Serine 70 and serine 137 each carry phosphoserine. A disordered region spans residues 157–203; it reads EKHNGTFGANSDTQFQFTSKNPYRDSPASVSGQEQPGEFFPESEAQK. A compositionally biased stretch (polar residues) spans 163-177; it reads FGANSDTQFQFTSKN. A phosphoserine mark is found at serine 182, serine 185, and serine 245. The tract at residues 263-708 is central conserved domain (CCD); required for localization to endoplasmic reticulum exit sites; the sequence is APMRFYVPHV…KHKDLEQNRT (446 aa). A compositionally biased stretch (basic and acidic residues) spans 703–715; sequence LEQNRTGAPRDPD. 3 disordered regions span residues 703 to 754, 798 to 820, and 850 to 1051; these read LEQN…LWST, SGAS…EDML, and TPAA…TQPC. Over residues 737–754 the composition is skewed to polar residues; it reads GHQNYSEDSEYSSTLWST. A compositionally biased stretch (low complexity) spans 798–809; that stretch reads SGASGSSVAVTG. Threonine 850 is subject to Phosphothreonine. Residues serine 860, serine 863, serine 866, serine 874, and serine 875 each carry the phosphoserine modification. The segment covering 877 to 897 has biased composition (basic and acidic residues); sequence GADKPSHPDASQKGKLGDGKN. Residues 900-920 show a composition bias toward low complexity; sequence SSGFGWFSWFRSKPASSVSTS. A compositionally biased stretch (acidic residues) spans 921–932; that stretch reads GDEDSSDSSDSE. The segment covering 936–947 has biased composition (low complexity); sequence RASSPHHASPGL. Positions 984 to 993 are enriched in gly residues; the sequence is EGMGIGGFSG. Polar residues predominate over residues 1022 to 1037; that stretch reads NPSQVPQLPTASSLNR.

The protein belongs to the SEC16 family. SEC16A and SEC16B are each present in multiple copies in a heteromeric complex. Interacts with TFG. Interacts with SEC13. In terms of tissue distribution, liver.

The protein resides in the endoplasmic reticulum membrane. The protein localises to the golgi apparatus membrane. Plays a role in the organization of the endoplasmic reticulum exit sites (ERES), also known as transitional endoplasmic reticulum (tER). Required for secretory cargo traffic from the endoplasmic reticulum to the Golgi apparatus. Involved in peroxisome biogenesis. Regulates the transport of peroxisomal biogenesis factors PEX3 and PEX16 from the ER to peroxisomes. In Mus musculus (Mouse), this protein is Protein transport protein Sec16B (Sec16b).